Consider the following 1172-residue polypeptide: Putative cadmium/zinc-transporting ATPase HMA4 (1172 aa).

At 1 to 93 (MALQNKEEEK…VRVNGETSFK (93 aa)) the chain is on the cytoplasmic side. One can recognise an HMA domain in the interval 17 to 83 (QKSYFDVLGI…ALNEARLEAN (67 aa)). Residues 94 to 115 (NKWPSPFAVVSGLLLLLSFLKF) traverse the membrane as a helical segment. The Extracellular segment spans residues 116-118 (VYS). The helical transmembrane segment at 119–138 (PLRWLAVAAVAAGIYPILAK) threads the bilayer. Residues 139–145 (AFASIKR) lie on the Cytoplasmic side of the membrane. Residues 146-166 (PRIDINILVIITVIATLAMQD) traverse the membrane as a helical segment. F167 is a topological domain (extracellular). Residues 168-188 (MEAAAVVFLFTISDWLETRAS) form a helical membrane-spanning segment. Over 189 to 314 (YKATSVMQSL…KTKSQRLIDK (126 aa)) the chain is Cytoplasmic. The helical transmembrane segment at 315 to 337 (CSQYYTPAIILVSACVAIVPVIM) threads the bilayer. At 338 to 345 (KVHNLKHW) the chain is on the extracellular side. The helical transmembrane segment at 346–363 (FHLALVVLVSGCPCGLIL) threads the bilayer. Residues 364–656 (STPVATFCAL…KLARRARRKV (293 aa)) lie on the Cytoplasmic side of the membrane. Residue D401 is the 4-aspartylphosphate intermediate of the active site. Mg(2+) is bound by residues D601 and D605. The chain crosses the membrane as a helical span at residues 657-676 (VENVCLSIILKAGILALAFA). Residues 677–680 (GHPL) lie on the Extracellular side of the membrane. A helical membrane pass occupies residues 681 to 700 (IWAAVLVDVGTCLLVIFNSM). Residues 701-1172 (LLLREKKKIG…HHHHHHHVSA (472 aa)) lie on the Cytoplasmic side of the membrane.

It belongs to the cation transport ATPase (P-type) (TC 3.A.3) family. Type IB subfamily.

The protein resides in the membrane. The enzyme catalyses Zn(2+)(in) + ATP + H2O = Zn(2+)(out) + ADP + phosphate + H(+). It catalyses the reaction Cd(2+)(in) + ATP + H2O = Cd(2+)(out) + ADP + phosphate + H(+). Its function is as follows. Involved in cadmium/zinc transport. In Arabidopsis thaliana (Mouse-ear cress), this protein is Putative cadmium/zinc-transporting ATPase HMA4 (HMA4).